Reading from the N-terminus, the 199-residue chain is Large ribosomal subunit protein eL13A (199 aa).

A phosphothreonine mark is found at Thr144 and Thr152.

This sequence belongs to the eukaryotic ribosomal protein eL13 family. As to quaternary structure, component of the large ribosomal subunit (LSU). Mature yeast ribosomes consist of a small (40S) and a large (60S) subunit. The 40S small subunit contains 1 molecule of ribosomal RNA (18S rRNA) and 33 different proteins (encoded by 57 genes). The large 60S subunit contains 3 rRNA molecules (25S, 5.8S and 5S rRNA) and 46 different proteins (encoded by 81 genes).

It is found in the cytoplasm. In terms of biological role, component of the ribosome, a large ribonucleoprotein complex responsible for the synthesis of proteins in the cell. The small ribosomal subunit (SSU) binds messenger RNAs (mRNAs) and translates the encoded message by selecting cognate aminoacyl-transfer RNA (tRNA) molecules. The large subunit (LSU) contains the ribosomal catalytic site termed the peptidyl transferase center (PTC), which catalyzes the formation of peptide bonds, thereby polymerizing the amino acids delivered by tRNAs into a polypeptide chain. The nascent polypeptides leave the ribosome through a tunnel in the LSU and interact with protein factors that function in enzymatic processing, targeting, and the membrane insertion of nascent chains at the exit of the ribosomal tunnel. This chain is Large ribosomal subunit protein eL13A, found in Saccharomyces cerevisiae (strain ATCC 204508 / S288c) (Baker's yeast).